The following is a 307-amino-acid chain: sn-1-specific diacylglycerol lipase ABHD11 (307 aa).

A mitochondrion-targeting transit peptide spans 1–34 (MLRWARAWRVPRGVLGASSPRRLAVPVTFCSSRS). N6-succinyllysine is present on Lys-79. Ser-133 serves as the catalytic Charge relay system. Lys-196 carries the N6-succinyllysine modification. Active-site charge relay system residues include Asp-229 and His-288.

It belongs to the AB hydrolase superfamily. Interacts with OGDH and DLST; this interaction maintains the functional lipoylation of the 2-oxoglutarate dehydrogenase complex. In terms of processing, phosphorylated. As to expression, expressed in white adipose tissues.

The protein localises to the mitochondrion. It is found in the mitochondrion matrix. It carries out the reaction 1-octadecanoyl-2-(5Z,8Z,11Z,14Z-eicosatetraenoyl)-sn-glycerol + H2O = 2-(5Z,8Z,11Z,14Z-eicosatetraenoyl)-glycerol + octadecanoate + H(+). The catalysed reaction is a 1,2-diacyl-sn-glycerol + H2O = a 2-acylglycerol + a fatty acid + H(+). It catalyses the reaction a 1,3-diacyl-sn-glycerol + H2O = a 1-acyl-sn-glycerol + a fatty acid + H(+). The enzyme catalyses 1-octadecanoyl-2-(9Z-octadecenoyl)-sn-glycerol + H2O = 2-(9Z-octadecenoyl)-glycerol + octadecanoate + H(+). It carries out the reaction 1-octadecanoyl-2-(4Z,7Z,10Z,13Z,16Z,19Z-docosahexaenoyl)-sn-glycerol + H2O = 2-(4Z,7Z,10Z,13Z,16Z,19Z-docosahexaenoyl)-glycerol + octadecanoate + H(+). The catalysed reaction is 1,2-didecanoylglycerol + H2O = decanoylglycerol + decanoate + H(+). Catalyzes the hydrolysis of diacylglycerol in vitro and may function as a key regulator in lipid metabolism, namely by regulating the intracellular levels of diacylglycerol. 1,2-diacyl-sn-glycerols are the preferred substrate over 1,3-diacyl-sn-glycerols. The enzyme hydrolyzes stearate in preference to palmitate from the sn-1 position of 1,2-diacyl-sn-glycerols. Maintains the functional lipoylation of the 2-oxoglutarate dehydrogenase complex (OGDHc) through its interaction with the OGDHc by preventing the formation of lipoyl adducts. In addition, is also required for the expansion and differentiation of embryonic stem cells (ESCs). The sequence is that of sn-1-specific diacylglycerol lipase ABHD11 from Mus musculus (Mouse).